We begin with the raw amino-acid sequence, 298 residues long: Acetyl-coenzyme A carboxylase carboxyl transferase subunit beta (298 aa).

Residues 1–21 (MNQEVKSGKVLSPSTPWTQRP) are disordered. A CoA carboxyltransferase N-terminal domain is found at 41–298 (PTIECPECHA…RLVSKLMNLP (258 aa)). Residues Cys45, Cys48, Cys64, and Cys67 each contribute to the Zn(2+) site. The C4-type zinc-finger motif lies at 45-67 (CPECHALVTRTAISFNAYVCPQC).

Belongs to the AccD/PCCB family. As to quaternary structure, acetyl-CoA carboxylase is a heterohexamer composed of biotin carboxyl carrier protein (AccB), biotin carboxylase (AccC) and two subunits each of ACCase subunit alpha (AccA) and ACCase subunit beta (AccD). It depends on Zn(2+) as a cofactor.

It is found in the cytoplasm. The catalysed reaction is N(6)-carboxybiotinyl-L-lysyl-[protein] + acetyl-CoA = N(6)-biotinyl-L-lysyl-[protein] + malonyl-CoA. Its pathway is lipid metabolism; malonyl-CoA biosynthesis; malonyl-CoA from acetyl-CoA: step 1/1. In terms of biological role, component of the acetyl coenzyme A carboxylase (ACC) complex. Biotin carboxylase (BC) catalyzes the carboxylation of biotin on its carrier protein (BCCP) and then the CO(2) group is transferred by the transcarboxylase to acetyl-CoA to form malonyl-CoA. This chain is Acetyl-coenzyme A carboxylase carboxyl transferase subunit beta, found in Acinetobacter baumannii (strain AYE).